The sequence spans 380 residues: Glucose-1-phosphate adenylyltransferase (380 aa).

Residues Gly164, 179-180, and Ser190 contribute to the alpha-D-glucose 1-phosphate site; that span reads EK.

Belongs to the bacterial/plant glucose-1-phosphate adenylyltransferase family. As to quaternary structure, homotetramer.

The enzyme catalyses alpha-D-glucose 1-phosphate + ATP + H(+) = ADP-alpha-D-glucose + diphosphate. It participates in glycan biosynthesis; glycogen biosynthesis. Its function is as follows. Involved in the biosynthesis of ADP-glucose, a building block required for the elongation reactions to produce glycogen. Catalyzes the reaction between ATP and alpha-D-glucose 1-phosphate (G1P) to produce pyrophosphate and ADP-Glc. The sequence is that of Glucose-1-phosphate adenylyltransferase from Streptococcus pneumoniae serotype 2 (strain D39 / NCTC 7466).